Reading from the N-terminus, the 259-residue chain is Putative aldolase class 2 protein PA3430 (259 aa).

Zn(2+) contacts are provided by histidine 113, histidine 115, and histidine 176.

This sequence belongs to the aldolase class II family. Zn(2+) serves as cofactor.

This chain is Putative aldolase class 2 protein PA3430, found in Pseudomonas aeruginosa (strain ATCC 15692 / DSM 22644 / CIP 104116 / JCM 14847 / LMG 12228 / 1C / PRS 101 / PAO1).